The following is a 721-amino-acid chain: bZIP transcription factor 17 (721 aa).

2 disordered regions span residues 1 to 51 and 87 to 232; these read MAEP…LMSD and QEQF…EKKR. The Cytoplasmic portion of the chain corresponds to 1 to 366; the sequence is MAEPITKEQP…KSEAKTKKVA (366 aa). The span at 9–25 shows a compositional bias: pro residues; sequence QPPPPAPDPNSTYPPPS. Basic and acidic residues predominate over residues 125-141; it reads ESPRDSDDRCSGADHNL. Over residues 146-170 the composition is skewed to polar residues; the sequence is PLSSQGSGNCGSDVSEATNESSPKS. Over residues 204-216 the composition is skewed to basic and acidic residues; sequence DESRNSKYRRSGE. Residues 228–288 form the bZIP domain; that stretch reads DEKKRARLMR…AENATLRQQL (61 aa). Residues 230–261 form a basic motif region; it reads KKRARLMRNRESAQLSRQRKKHYVEELEEKVR. Positions 267 to 274 are leucine-zipper; it reads ITDLNGKI. A disordered region spans residues 337–359; sequence PRLKPQNTLGTSKAKKSESKKSE. Residues 367–387 traverse the membrane as a helical segment; that stretch reads SISFLGLLFCLFLFGALAPIV. The Lumenal portion of the chain corresponds to 388–721; that stretch reads NVNYGGISGA…RSGAPHLVTT (334 aa). Residues 422–436 show a composition bias toward polar residues; the sequence is TSRSGAGTGVSNSNG. The interval 422–462 is disordered; that stretch reads TSRSGAGTGVSNSNGMHRGRDSDRGARKNISATESSVTPGN. N-linked (GlcNAc...) asparagine glycosylation is found at asparagine 450, asparagine 462, asparagine 609, and asparagine 617. A compositionally biased stretch (polar residues) spans 451–462; it reads ISATESSVTPGN. The short motif at 627–630 is the RRIL cleavage motif element; that stretch reads RRIL. N-linked (GlcNAc...) asparagine glycosylation is found at asparagine 643 and asparagine 651.

Belongs to the bZIP family. As to quaternary structure, interacts with BZIP28.

The protein localises to the endoplasmic reticulum membrane. The protein resides in the golgi apparatus membrane. It localises to the nucleus. Transcriptional activator involved in salt and osmotic stress responses. Functions as a stress sensor and transducer in a signaling pathway that resembles an ER stress response. Following salt stress, BZIP17 is cleaved by SBT6.1 (S1P) and S2P at the C-terminus and the N-terminal bZIP component is translocated to the nucleus, where it activates the expression of salt stress response genes. Functions as a stress sensor and transducer in ER stress signaling pathway. ER stress induces proteolysis of BZIP17 by SBT6.1 (S1P) and S2P, and the N-terminal bZIP component is translocated to the nucleus, where it activates the expression and production of ER chaperones, as well as protein involved in brassinosteroid (BR) signaling, which is required for stress acclimation and growth. The polypeptide is bZIP transcription factor 17 (Arabidopsis thaliana (Mouse-ear cress)).